The following is a 266-amino-acid chain: Mitochondrial import inner membrane translocase subunit Tim29 (266 aa).

A mitochondrion-targeting transit peptide spans 1 to 37 (MVTAALKRFWSGGHGEAGGEAGGATTVAVKPGLWTRL). At 38 to 65 (STWAGALLRDYAEACGDAAAAARARPGR) the chain is on the mitochondrial matrix side. The chain crosses the membrane as a helical span at residues 66 to 83 (AALYVGLLGGAAACCALA). Residues 84–266 (PSEAAFEEAL…DSLVQSDVSR (183 aa)) are Mitochondrial intermembrane-facing.

As to quaternary structure, component of the TIM22 complex, which core is composed of TIMM22, associated with TIMM10 (TIMM10A and/or TIMM10B), TIMM9, AGK and TIMM29. Interacts with TIMM10B; the interaction is direct. Interacts with TOMM40; linking the TIM22 complex to the TOM complex. Interacts with TIMM22 (when oxidized); the interaction is direct.

The protein localises to the mitochondrion inner membrane. In terms of biological role, component of the TIM22 complex, a complex that mediates the import and insertion of multi-pass transmembrane proteins into the mitochondrial inner membrane. The TIM22 complex forms a twin-pore translocase that uses the membrane potential as the external driving force. Required for the stability of the TIM22 complex and functions in the assembly of the TIMM22 protein into the TIM22 complex. May facilitate cooperation between TIM22 and TOM complexes by interacting with TOMM40. The protein is Mitochondrial import inner membrane translocase subunit Tim29 (Timm29) of Mus musculus (Mouse).